We begin with the raw amino-acid sequence, 523 residues long: Uridylate cyclase (523 aa).

2 consecutive Guanylate cyclase domains span residues 69 to 209 and 318 to 438; these read VHVY…AKLA and MSIF…IGIR. Residues tyrosine 72 and arginine 125 each coordinate a ribonucleoside 5'-triphosphate. Mn(2+) is bound by residues aspartate 323, isoleucine 324, and aspartate 372.

The protein belongs to the adenylyl cyclase class-4/guanylyl cyclase family. Pyrimidine cyclase subfamily. As to quaternary structure, monomer. Requires Mn(2+) as cofactor.

The protein localises to the cytoplasm. It catalyses the reaction UTP = 3',5'-cyclic UMP + diphosphate. Its function is as follows. Pycsar (pyrimidine cyclase system for antiphage resistance) provides immunity against bacteriophage. The pyrimidine cyclase (PycC) synthesizes cyclic nucleotides in response to infection; these serve as specific second messenger signals. The signals activate the nearby effector, leading to bacterial cell death and abortive phage infection. A clade A Pycsar system. Functionally, the pyrimidine cyclase gene of a two-gene Pycsar system, generates cyclic UMP (cUMP) from UTP, has little to no activity on ATP, CTP or GTP. Expression of this and effector RsPycTM (AC A0A4R2UGS4) probably confers resistance to some bacteriophage. The genes are probably only expressed in response to bacteriophage infection. This is Uridylate cyclase from Rhizobium sp. (strain PP-F2F-G36).